Here is a 220-residue protein sequence, read N- to C-terminus: Aspartic protease inhibitor 2 (220 aa).

Residues 1 to 23 (MMKCLFLLCLCLLPIVVFSSTFT) form the signal peptide. The propeptide occupies 24–32 (SQNLIDLPS). A Vacuolar targeting signal motif is present at residues 26–31 (NLIDLP). The N-linked (GlcNAc...) asparagine glycan is linked to asparagine 51. 2 disulfides stabilise this stretch: cysteine 80–cysteine 125 and cysteine 174–cysteine 185.

The protein belongs to the protease inhibitor I3 (leguminous Kunitz-type inhibitor) family. As to expression, tubers.

The protein localises to the vacuole. In terms of biological role, inhibitor of cathepsin D (aspartic protease). May also inhibit trypsin and chymotrypsin (serine proteases). Protects the plant by inhibiting proteases of invading organisms. This is Aspartic protease inhibitor 2 from Solanum tuberosum (Potato).